Reading from the N-terminus, the 245-residue chain is 1-(5-phosphoribosyl)-5-[(5-phosphoribosylamino)methylideneamino] imidazole-4-carboxamide isomerase (245 aa).

D7 serves as the catalytic Proton acceptor. D129 functions as the Proton donor in the catalytic mechanism.

Belongs to the HisA/HisF family.

Its subcellular location is the cytoplasm. The enzyme catalyses 1-(5-phospho-beta-D-ribosyl)-5-[(5-phospho-beta-D-ribosylamino)methylideneamino]imidazole-4-carboxamide = 5-[(5-phospho-1-deoxy-D-ribulos-1-ylimino)methylamino]-1-(5-phospho-beta-D-ribosyl)imidazole-4-carboxamide. It functions in the pathway amino-acid biosynthesis; L-histidine biosynthesis; L-histidine from 5-phospho-alpha-D-ribose 1-diphosphate: step 4/9. The polypeptide is 1-(5-phosphoribosyl)-5-[(5-phosphoribosylamino)methylideneamino] imidazole-4-carboxamide isomerase (Shewanella amazonensis (strain ATCC BAA-1098 / SB2B)).